Here is a 234-residue protein sequence, read N- to C-terminus: MGQKVNPIGLRLGINRNWESRWFPKFETMPANVAEDDKIRKYVKKELYYAGIAQTVVERTAKKVRVTVVAARPGIIIGKKGADVEKLKDALSKLVGKEIAVNIKEERKPQISAQLSAENVAQQLERRVAFRRAMKRVMQNALKGGAKGIKVSVSGRLGGAEMARTEWYLEGRVPLHTLRARIDYGFAEAHTTYGCIGIKVWIFKGEVLAKGIPTEKAEETTSKPKRRPAKKRGK.

Residues 39-107 enclose the KH type-2 domain; that stretch reads IRKYVKKELY…EIAVNIKEER (69 aa). Basic and acidic residues predominate over residues 213-222; sequence PTEKAEETTS. The tract at residues 213–234 is disordered; that stretch reads PTEKAEETTSKPKRRPAKKRGK. Basic residues predominate over residues 223 to 234; it reads KPKRRPAKKRGK.

Belongs to the universal ribosomal protein uS3 family. In terms of assembly, part of the 30S ribosomal subunit. Forms a tight complex with proteins S10 and S14.

Functionally, binds the lower part of the 30S subunit head. Binds mRNA in the 70S ribosome, positioning it for translation. This Aliarcobacter butzleri (strain RM4018) (Arcobacter butzleri) protein is Small ribosomal subunit protein uS3.